The primary structure comprises 284 residues: MEMO1 family protein STK_20620 (284 aa).

The protein belongs to the MEMO1 family.

In Sulfurisphaera tokodaii (strain DSM 16993 / JCM 10545 / NBRC 100140 / 7) (Sulfolobus tokodaii), this protein is MEMO1 family protein STK_20620.